The sequence spans 970 residues: Pentatricopeptide repeat-containing protein At1g18485 (970 aa).

PPR repeat units lie at residues 119–149 (DDVL…LRSK), 150–185 (NLFQ…DLLP), 186–220 (DHFT…GLVE), 221–251 (DVFV…MPER), 252–282 (NLVS…MMEE), 291–325 (DVAT…RLDK), 326–356 (ELVL…NNNK), 357–391 (NVVS…GEDV), 394–428 (DEVT…EFVY), 429–459 (NELV…IRSK), 460–494 (TVNS…GLLP), 495–529 (DSFT…WLER), 530–560 (DLFV…MEDK), 561–595 (SLVS…GIQL), 597–630 (GISM…LLED), 631–661 (DAFI…LKEK), 662–696 (STAS…GHNP), 697–727 (DDLT…MKSS), and 733–764 (NLKH…MSEE). The interval 770–845 (WKSLLSSCRI…AGCSWIELNR (76 aa)) is type E motif. A type E(+) motif region spans residues 846–875 (KVFSFVVGERFLDGFEEIKSLWSILEMKIS). The type DYW motif stretch occupies residues 876–970 (KMGYRPDTMS…NGVCSCGDYW (95 aa)).

The protein belongs to the PPR family. PCMP-H subfamily.

This chain is Pentatricopeptide repeat-containing protein At1g18485 (PCMP-H8), found in Arabidopsis thaliana (Mouse-ear cress).